Reading from the N-terminus, the 396-residue chain is Elongation factor Tu (396 aa).

In terms of domain architecture, tr-type G spans 10 to 206 (KPHCNIGTIG…AVDAYIPQPE (197 aa)). The tract at residues 19-26 (GHVDHGKT) is G1. A GTP-binding site is contributed by 19–26 (GHVDHGKT). Thr26 provides a ligand contact to Mg(2+). Residues 60 to 64 (GITIS) form a G2 region. Residues 81–84 (DCPG) form a G3 region. GTP-binding positions include 81 to 85 (DCPGH) and 136 to 139 (NKCD). Residues 136–139 (NKCD) form a G4 region. The interval 174-176 (SAL) is G5.

It belongs to the TRAFAC class translation factor GTPase superfamily. Classic translation factor GTPase family. EF-Tu/EF-1A subfamily. In terms of assembly, monomer.

The protein resides in the cytoplasm. It carries out the reaction GTP + H2O = GDP + phosphate + H(+). GTP hydrolase that promotes the GTP-dependent binding of aminoacyl-tRNA to the A-site of ribosomes during protein biosynthesis. The protein is Elongation factor Tu of Rhodopseudomonas palustris (strain HaA2).